The primary structure comprises 290 residues: Diaminopimelate epimerase (290 aa).

2 residues coordinate substrate: asparagine 14 and asparagine 67. Cysteine 76 (proton donor) is an active-site residue. Substrate contacts are provided by residues 77–78 (GN), asparagine 166, asparagine 199, and 217–218 (ER). The Proton acceptor role is filled by cysteine 226. 227–228 (GT) is a binding site for substrate.

This sequence belongs to the diaminopimelate epimerase family. As to quaternary structure, homodimer.

The protein localises to the cytoplasm. It carries out the reaction (2S,6S)-2,6-diaminopimelate = meso-2,6-diaminopimelate. It functions in the pathway amino-acid biosynthesis; L-lysine biosynthesis via DAP pathway; DL-2,6-diaminopimelate from LL-2,6-diaminopimelate: step 1/1. In terms of biological role, catalyzes the stereoinversion of LL-2,6-diaminopimelate (L,L-DAP) to meso-diaminopimelate (meso-DAP), a precursor of L-lysine and an essential component of the bacterial peptidoglycan. This is Diaminopimelate epimerase from Geobacillus kaustophilus (strain HTA426).